The following is a 101-amino-acid chain: Small ribosomal subunit protein bS6 (101 aa).

This sequence belongs to the bacterial ribosomal protein bS6 family.

Binds together with bS18 to 16S ribosomal RNA. In Paenarthrobacter aurescens (strain TC1), this protein is Small ribosomal subunit protein bS6.